Consider the following 182-residue polypeptide: Putative manganese efflux pump MntP (182 aa).

A run of 6 helical transmembrane segments spans residues 7 to 27 (IISI…VSLG), 38 to 58 (IAYI…AGML), 71 to 91 (TSFA…FSAF), 106 to 126 (LWII…GLGI), 131 to 151 (IFVT…LGML), and 159 to 179 (FLGV…GIFI).

This sequence belongs to the MntP (TC 9.B.29) family.

Its subcellular location is the cell membrane. Its function is as follows. Probably functions as a manganese efflux pump. This Oceanobacillus iheyensis (strain DSM 14371 / CIP 107618 / JCM 11309 / KCTC 3954 / HTE831) protein is Putative manganese efflux pump MntP.